Reading from the N-terminus, the 148-residue chain is Endothelial differentiation-related factor 1 homolog (148 aa).

Residues 1-26 form a disordered region; that stretch reads MAESDWDTVTVLRKKGPSAAQAKSKQ. In terms of domain architecture, HTH cro/C1-type spans 81–135; the sequence is IQQGRQSKGMTQKDLATKINEKPQVIADYESGRAIPNNQVMGKIERAIGLKLRGK. Positions 92–111 form a DNA-binding region, H-T-H motif; that stretch reads QKDLATKINEKPQVIADYES.

It is found in the nucleus. In terms of biological role, probable transcriptional coactivator. This is Endothelial differentiation-related factor 1 homolog (EDF1) from Gallus gallus (Chicken).